We begin with the raw amino-acid sequence, 218 residues long: MPGLTIGDTVPNLELDSTHGKIRIHDYVGNGYVILFSHPGDFTPVCTTELAAMANYAKEFEKRGVKLLGISCDDVQSHKEWTKDIEAYKPGSKVTYPIMADPDRSAIKQLNMVDPDEKDAQGQLPSRTLHIVGPDKVVKLSFLYPSCTGRNMDEVVRAVDSLLTAAKHKVATPANWKPGECVVIAPGVSDEEAKKMFPQGFETADLPSKKGYLRFTKV.

A Thioredoxin domain is found at 4-164 (LTIGDTVPNL…VVRAVDSLLT (161 aa)). The Cysteine sulfenic acid (-SOH) intermediate role is filled by Cys46. The Bipartite nuclear localization signal motif lies at 194 to 217 (KKMFPQGFETADLPSKKGYLRFTK).

The protein belongs to the peroxiredoxin family. Prx6 subfamily. In terms of tissue distribution, embryo and aleurone cells.

It is found in the nucleus. The protein resides in the cytoplasm. It carries out the reaction a hydroperoxide + [thioredoxin]-dithiol = an alcohol + [thioredoxin]-disulfide + H2O. Thiol-specific peroxidase that catalyzes the reduction of hydrogen peroxide and organic hydroperoxides to water and alcohols, respectively. Seems to contribute to the inhibition of germination during stress. The polypeptide is 1-Cys peroxiredoxin PER1 (PER1) (Hordeum vulgare (Barley)).